Here is an 854-residue protein sequence, read N- to C-terminus: DNA topoisomerase 1 type prokaryotic (854 aa).

Residues 2 to 110 form the Toprim domain; the sequence is SILILLESPG…KRLRFNAITK (109 aa). Residues Glu-8 and Asp-79 each coordinate Mg(2+). The region spanning 124 to 610 is the Topo IA-type catalytic domain; that stretch reads DKNLVDAQKA…DFYDKLKPIV (487 aa). The interval 158 to 163 is interaction with DNA; the sequence is SAGRVQ. The active-site O-(5'-phospho-DNA)-tyrosine intermediate is Tyr-302. A disordered region spans residues 802–854; it reads KSAPKGGSKTIRKPSQTKYSQTKSTKSTKSTKSTNKKFVGKSAKKTTKKTTKK. A compositionally biased stretch (low complexity) spans 814 to 834; the sequence is KPSQTKYSQTKSTKSTKSTKS. The span at 835–854 shows a compositional bias: basic residues; it reads TNKKFVGKSAKKTTKKTTKK.

It belongs to the type IA topoisomerase family. Requires Mg(2+) as cofactor.

It localises to the virion. It catalyses the reaction ATP-independent breakage of single-stranded DNA, followed by passage and rejoining.. Releases the supercoiling and torsional tension of DNA, which is introduced during the DNA replication and transcription, by transiently cleaving and rejoining one strand of the DNA duplex. Introduces a single-strand break via transesterification at a target site in duplex DNA. The scissile phosphodiester is attacked by the catalytic tyrosine of the enzyme, resulting in the formation of a DNA-(5'-phosphotyrosyl)-enzyme intermediate and the expulsion of a 3'-OH DNA strand. The free DNA strand then undergoes passage around the unbroken strand, thus removing DNA supercoils. Finally, in the religation step, the DNA 3'-OH attacks the covalent intermediate to expel the active-site tyrosine and restore the DNA phosphodiester backbone. The sequence is that of DNA topoisomerase 1 type prokaryotic (TOP1P) from Acanthamoeba polyphaga (Amoeba).